We begin with the raw amino-acid sequence, 208 residues long: Small ribosomal subunit protein eS8 (208 aa).

This sequence belongs to the eukaryotic ribosomal protein eS8 family. As to quaternary structure, component of the small ribosomal subunit. Identified in a IGF2BP1-dependent mRNP granule complex containing untranslated mRNAs. Part of the small subunit (SSU) processome, composed of more than 70 proteins and the RNA chaperone small nucleolar RNA (snoRNA) U3.

Its subcellular location is the cytoplasm. The protein resides in the membrane. The protein localises to the nucleus. It is found in the nucleolus. Functionally, component of the small ribosomal subunit. The ribosome is a large ribonucleoprotein complex responsible for the synthesis of proteins in the cell. Part of the small subunit (SSU) processome, first precursor of the small eukaryotic ribosomal subunit. During the assembly of the SSU processome in the nucleolus, many ribosome biogenesis factors, an RNA chaperone and ribosomal proteins associate with the nascent pre-rRNA and work in concert to generate RNA folding, modifications, rearrangements and cleavage as well as targeted degradation of pre-ribosomal RNA by the RNA exosome. This is Small ribosomal subunit protein eS8 (rps-8) from Caenorhabditis elegans.